The sequence spans 206 residues: Large ribosomal subunit protein bL25 (206 aa).

This sequence belongs to the bacterial ribosomal protein bL25 family. CTC subfamily. In terms of assembly, part of the 50S ribosomal subunit; part of the 5S rRNA/L5/L18/L25 subcomplex. Contacts the 5S rRNA. Binds to the 5S rRNA independently of L5 and L18.

This is one of the proteins that binds to the 5S RNA in the ribosome where it forms part of the central protuberance. This chain is Large ribosomal subunit protein bL25, found in Ralstonia nicotianae (strain ATCC BAA-1114 / GMI1000) (Ralstonia solanacearum).